The following is a 238-amino-acid chain: uncharacterized protein (238 aa).

Transmembrane regions (helical) follow at residues 13 to 33, 40 to 60, 107 to 127, and 140 to 160; these read TLFFIYFVFLTSFCLCFFGII, GSVGQLIAKLVVIVVLTLILG, VVLILSLVLTYYLSIYAFCQV, and VISLIILIFFLSLSFFVPMAF. 4Fe-4S ferredoxin-type domains follow at residues 178-208 and 204-233; these read PFFQLKTNNNCVKCKLCEFKCPMQIKITEKL and ITEKLDQKECIRCFECKSSCKKDALSFSYA. [4Fe-4S] cluster-binding residues include cysteine 188, cysteine 191, cysteine 194, cysteine 198, cysteine 213, cysteine 216, cysteine 219, and cysteine 223.

Its subcellular location is the cell membrane. This is an uncharacterized protein from Methanocaldococcus jannaschii (strain ATCC 43067 / DSM 2661 / JAL-1 / JCM 10045 / NBRC 100440) (Methanococcus jannaschii).